Consider the following 191-residue polypeptide: RNA pyrophosphohydrolase (191 aa).

Residues 6–149 (GYRLNVGIIL…KREVYRQALS (144 aa)) form the Nudix hydrolase domain. Residues 38 to 59 (GGIKVDEDPDAAMFRELYEEVG) carry the Nudix box motif. A disordered region spans residues 162–191 (GAQAVSDAGGTATRQIPVATEPSGPSSSQR).

The protein belongs to the Nudix hydrolase family. RppH subfamily. The cofactor is a divalent metal cation.

Accelerates the degradation of transcripts by removing pyrophosphate from the 5'-end of triphosphorylated RNA, leading to a more labile monophosphorylated state that can stimulate subsequent ribonuclease cleavage. The polypeptide is RNA pyrophosphohydrolase (Methylococcus capsulatus (strain ATCC 33009 / NCIMB 11132 / Bath)).